Reading from the N-terminus, the 256-residue chain is Dihydromonacolin L-[lovastatin nonaketide synthase] thioesterase (256 aa).

Active-site charge relay system residues include S122, D201, and H229.

This sequence belongs to the LovG family.

The enzyme catalyses dihydromonacolin L-[lovastatin nonaketide synthase] + H2O = holo-[lovastatin nonaketide synthase] + dihydromonacolin L carboxylate + H(+). Its pathway is polyketide biosynthesis; lovastatin biosynthesis. Functionally, esterase; part of the gene cluster that mediates the biosynthesis of lovastatin (also known as mevinolin, mevacor or monacolin K), a hypolipidemic inhibitor of (3S)-hydroxymethylglutaryl-coenzyme A (HMG-CoA) reductase (HMGR). The first step in the biosynthesis of lovastatin is the production of dihydromonacolin L acid by the lovastatin nonaketide synthase lovB and the trans-acting enoyl reductase lovC via condensation of one acetyl-CoA unit and 8 malonyl-CoA units. Dihydromonacolin L acid is released from lovB by the thioesterase lovG. Next, dihydromonacolin L acid is oxidized by the dihydromonacolin L monooxygenase lovA twice to form monacolin J acid. The 2-methylbutyrate moiety of lovastatin is synthesized by the lovastatin diketide synthase lovF via condensation of one acetyl-CoA unit and one malonyl-CoA unit. Finally, the covalent attachment of this moiety to monacolin J acid is catalyzed by the transesterase lovD to yield lovastatin. LovD has broad substrate specificity and can also convert monacolin J to simvastatin using alpha-dimethylbutanoyl-S-methyl-3-mercaptopropionate (DMB-S-MMP) as the thioester acyl donor, and can also catalyze the reverse reaction and function as hydrolase in vitro. LovD has much higher activity with LovF-bound 2-methylbutanoate than with free diketide substrates. In terms of biological role, esterase that catalyzes the release of covalently bound dihydromonacolin L from LovB during lovastatin biosynthesis. The protein is Dihydromonacolin L-[lovastatin nonaketide synthase] thioesterase of Aspergillus terreus.